The following is a 436-amino-acid chain: Xylose isomerase (436 aa).

Residues aspartate 306 and aspartate 308 each contribute to the Mg(2+) site.

The protein belongs to the xylose isomerase family. Homotetramer. Mg(2+) serves as cofactor.

The protein resides in the cytoplasm. The catalysed reaction is alpha-D-xylose = alpha-D-xylulofuranose. The polypeptide is Xylose isomerase (Sinorhizobium fredii (strain NBRC 101917 / NGR234)).